The following is a 203-amino-acid chain: Thymidylate kinase (203 aa).

10 to 17 (GTEGSGKS) is a binding site for ATP.

It belongs to the thymidylate kinase family.

The catalysed reaction is dTMP + ATP = dTDP + ADP. In terms of biological role, phosphorylation of dTMP to form dTDP in both de novo and salvage pathways of dTTP synthesis. The sequence is that of Thymidylate kinase from Dichelobacter nodosus (strain VCS1703A).